The sequence spans 342 residues: MAEMFYDDDADLSTITGKKVAVLGFGSQGHAHALSLRDSGVDVVVGLKEGSKSRAKAEEQGLTVLTPFEASKAADVIMVLVPDHLQRGLYAEAIEPNLTAGKALFFSHGFNIRFGYIKPPADVDVVMVAPKGPGHLVRREYVDGRGVPVIVAVEQDATGQAWALALAYAKAIGGLRAGGIKTTFTEETETDLFGEQAVLCGGASALVQTGFEVLTEAGYQPEVAYFECLHELKLIVDLMYEGGIAKQRWSVSDTAEWGDYVSGPRVIDASVKERMKDVLKDIQDGTFARNFIEDQDAGAPKFKELRAKAEQHPIEATGRELRKLMAWVKSDDSDYVEGSAAR.

The 181-residue stretch at 2 to 182 (AEMFYDDDAD…GGLRAGGIKT (181 aa)) folds into the KARI N-terminal Rossmann domain. Residues 25–28 (FGSQ), lysine 48, serine 51, serine 53, and 83–86 (DHLQ) contribute to the NADP(+) site. Histidine 108 is an active-site residue. Residue glycine 134 coordinates NADP(+). In terms of domain architecture, KARI C-terminal knotted spans 183–328 (TFTEETETDL…RELRKLMAWV (146 aa)). 4 residues coordinate Mg(2+): aspartate 191, glutamate 195, glutamate 227, and glutamate 231. Serine 252 contacts substrate.

It belongs to the ketol-acid reductoisomerase family. Mg(2+) is required as a cofactor.

The catalysed reaction is (2R)-2,3-dihydroxy-3-methylbutanoate + NADP(+) = (2S)-2-acetolactate + NADPH + H(+). The enzyme catalyses (2R,3R)-2,3-dihydroxy-3-methylpentanoate + NADP(+) = (S)-2-ethyl-2-hydroxy-3-oxobutanoate + NADPH + H(+). The protein operates within amino-acid biosynthesis; L-isoleucine biosynthesis; L-isoleucine from 2-oxobutanoate: step 2/4. It participates in amino-acid biosynthesis; L-valine biosynthesis; L-valine from pyruvate: step 2/4. Involved in the biosynthesis of branched-chain amino acids (BCAA). Catalyzes an alkyl-migration followed by a ketol-acid reduction of (S)-2-acetolactate (S2AL) to yield (R)-2,3-dihydroxy-isovalerate. In the isomerase reaction, S2AL is rearranged via a Mg-dependent methyl migration to produce 3-hydroxy-3-methyl-2-ketobutyrate (HMKB). In the reductase reaction, this 2-ketoacid undergoes a metal-dependent reduction by NADPH to yield (R)-2,3-dihydroxy-isovalerate. This chain is Ketol-acid reductoisomerase (NADP(+)), found in Kineococcus radiotolerans (strain ATCC BAA-149 / DSM 14245 / SRS30216).